A 344-amino-acid chain; its full sequence is Holliday junction branch migration complex subunit RuvB (344 aa).

Residues 1-181 (MERIVTPAEM…FGVLCAMEYY (181 aa)) are large ATPase domain (RuvB-L). Residues leucine 20, arginine 21, glycine 62, lysine 65, threonine 66, threonine 67, 128-130 (EDY), arginine 171, tyrosine 181, and arginine 218 each bind ATP. Threonine 66 provides a ligand contact to Mg(2+). Residues 182-252 (DENQLKEIVI…EAREALELLE (71 aa)) are small ATPAse domain (RuvB-S). The segment at 255-344 (NQGFDKVDNK…SNKGQTSFFK (90 aa)) is head domain (RuvB-H). Residues arginine 310 and arginine 315 each contribute to the DNA site.

This sequence belongs to the RuvB family. As to quaternary structure, homohexamer. Forms an RuvA(8)-RuvB(12)-Holliday junction (HJ) complex. HJ DNA is sandwiched between 2 RuvA tetramers; dsDNA enters through RuvA and exits via RuvB. An RuvB hexamer assembles on each DNA strand where it exits the tetramer. Each RuvB hexamer is contacted by two RuvA subunits (via domain III) on 2 adjacent RuvB subunits; this complex drives branch migration. In the full resolvosome a probable DNA-RuvA(4)-RuvB(12)-RuvC(2) complex forms which resolves the HJ.

It is found in the cytoplasm. It catalyses the reaction ATP + H2O = ADP + phosphate + H(+). Its function is as follows. The RuvA-RuvB-RuvC complex processes Holliday junction (HJ) DNA during genetic recombination and DNA repair, while the RuvA-RuvB complex plays an important role in the rescue of blocked DNA replication forks via replication fork reversal (RFR). RuvA specifically binds to HJ cruciform DNA, conferring on it an open structure. The RuvB hexamer acts as an ATP-dependent pump, pulling dsDNA into and through the RuvAB complex. RuvB forms 2 homohexamers on either side of HJ DNA bound by 1 or 2 RuvA tetramers; 4 subunits per hexamer contact DNA at a time. Coordinated motions by a converter formed by DNA-disengaged RuvB subunits stimulates ATP hydrolysis and nucleotide exchange. Immobilization of the converter enables RuvB to convert the ATP-contained energy into a lever motion, pulling 2 nucleotides of DNA out of the RuvA tetramer per ATP hydrolyzed, thus driving DNA branch migration. The RuvB motors rotate together with the DNA substrate, which together with the progressing nucleotide cycle form the mechanistic basis for DNA recombination by continuous HJ branch migration. Branch migration allows RuvC to scan DNA until it finds its consensus sequence, where it cleaves and resolves cruciform DNA. This Clostridium botulinum (strain Alaska E43 / Type E3) protein is Holliday junction branch migration complex subunit RuvB.